The sequence spans 298 residues: Calcium-binding protein 1 (298 aa).

Basic and acidic residues predominate over residues 1–10 (MSSHIAKSES). The segment at 1–131 (MSSHIAKSES…APAGTPEADP (131 aa)) is disordered. The N-myristoyl glycine moiety is linked to residue Ser2. A lipid anchor (S-palmitoyl cysteine) is attached at His4. Positions 11–25 (KTSLLKAAAASGGSR) are enriched in low complexity. 4 EF-hand domains span residues 153–188 (EEIE…MGYM), 207–224 (GHVD…KLLA), 230–265 (IGVK…LLGH), and 267–298 (VGHR…MMSR). Asp166, Asp168, Asp170, Tyr172, and Asp177 together coordinate Ca(2+). 4 residues coordinate Ca(2+): Asp243, Asn245, Asp247, and Glu249. Ser251 carries the phosphoserine modification. Ca(2+) is bound by residues Glu254, Asp280, Asn282, Asp284, Arg286, and Glu291.

In terms of assembly, interacts with ITPR1, ITPR2 and ITPR3. The strength of this interaction inversely correlates with calcium concentration. Interacts with CACNA1A (via C-terminal CDB motif) in the pre- and postsynaptic membranes. Interacts with CACNA1C. Interacts with CACNA1D. Interacts (via EF-hands 1 and 2) at microtubules with MAP1LC3B. Interacts (via EF-hands 1 and 2) with NSMF (via the central NLS-containing motif region), the interaction occurs in a calcium dependent manner after synaptic NMDA receptor stimulation and prevents nuclear import of NSMF. Interacts with MYO1C and TRPC5. Interacts with SPACA9. Post-translationally, phosphorylated. The phosphorylation regulates the activity. Somatodendritic compartment of neurons. Restricted expression in retina to a subpopulation of amacrine, bipolar, and ganglion cells. According to PubMed:11906216, expression is heterogeneous within brain regions and their major cell types and does not match with those of marker proteins for characterized neuronal subpopulations. Isoform 2: Minor isoform expressed in the brain, in the granule cell layer of the cerebellum, at low level. Not developmentally regulated. Isoform 3: Minor isoform expressed in the brain, in the granule cell layer. of the cerebellum, at low level. Not developmentally regulated.

It is found in the cytoplasm. It localises to the cytoskeleton. Functionally, modulates calcium-dependent activity of inositol 1,4,5-triphosphate receptors (ITPRs). Inhibits agonist-induced intracellular calcium signaling. Enhances inactivation and does not support calcium-dependent facilitation of voltage-dependent P/Q-type calcium channels. Causes calcium-dependent facilitation and inhibits inactivation of L-type calcium channels by binding to the same sites as calmodulin in the C-terminal domain of CACNA1C, but has an opposite effect on channel function. Suppresses the calcium-dependent inactivation of CACNA1D. Inhibits TRPC5 channels. Prevents NMDA receptor-induced cellular degeneration. Required for the normal transfer of light signals through the retina. The polypeptide is Calcium-binding protein 1 (Cabp1) (Rattus norvegicus (Rat)).